Reading from the N-terminus, the 235-residue chain is 2-C-methyl-D-erythritol 4-phosphate cytidylyltransferase (235 aa).

It belongs to the IspD/TarI cytidylyltransferase family. IspD subfamily.

It carries out the reaction 2-C-methyl-D-erythritol 4-phosphate + CTP + H(+) = 4-CDP-2-C-methyl-D-erythritol + diphosphate. It participates in isoprenoid biosynthesis; isopentenyl diphosphate biosynthesis via DXP pathway; isopentenyl diphosphate from 1-deoxy-D-xylulose 5-phosphate: step 2/6. In terms of biological role, catalyzes the formation of 4-diphosphocytidyl-2-C-methyl-D-erythritol from CTP and 2-C-methyl-D-erythritol 4-phosphate (MEP). This chain is 2-C-methyl-D-erythritol 4-phosphate cytidylyltransferase, found in Pseudomonas putida (strain GB-1).